A 185-amino-acid polypeptide reads, in one-letter code: Elongation factor P (185 aa).

Belongs to the elongation factor P family.

Its subcellular location is the cytoplasm. The protein operates within protein biosynthesis; polypeptide chain elongation. Involved in peptide bond synthesis. Stimulates efficient translation and peptide-bond synthesis on native or reconstituted 70S ribosomes in vitro. Probably functions indirectly by altering the affinity of the ribosome for aminoacyl-tRNA, thus increasing their reactivity as acceptors for peptidyl transferase. The polypeptide is Elongation factor P (Moorella thermoacetica (strain ATCC 39073 / JCM 9320)).